We begin with the raw amino-acid sequence, 418 residues long: Sonic hedgehog protein (418 aa).

A signal peptide spans 1–23 (MRLLTRVLLVSLLTLSLVVSGLA). C24 carries the N-palmitoyl cysteine lipid modification. A Cardin-Weintraub motif is present at residues 32–38 (RRRHPKK). Residues E89, E90, D95, T125, E126, D129, and D131 each contribute to the Ca(2+) site. Residues H140, D147, and H182 each contribute to the Zn(2+) site. G197 carries the Cholesterol glycine ester lipid modification.

This sequence belongs to the hedgehog family. As to quaternary structure, interacts with HHATL/GUP1 which negatively regulates HHAT-mediated palmitoylation of the SHH N-terminus. Interacts with BOC and CDON. Interacts with HHIP. Interacts with DISP1 via its cholesterol anchor. Interacts with SCUBE2. In terms of assembly, multimer. The C-terminal domain displays an autoproteolysis activity and a cholesterol transferase activity. Both activities result in the cleavage of the full-length protein and covalent attachment of a cholesterol moiety to the C-terminal of the newly generated N-terminal fragment (ShhN). Cholesterylation is required for the sonic hedgehog protein N-product targeting to lipid rafts and multimerization. ShhN is the active species in both local and long-range signaling, whereas the C-product (ShhC) is degraded in the reticulum endoplasmic. In terms of processing, N-palmitoylation by HHAT of ShhN is required for sonic hedgehog protein N-product multimerization and full activity. It is a prerequisite for the membrane-proximal positioning and the subsequent shedding of this N-terminal peptide. Post-translationally, the lipidated N- and C-terminal peptides of ShhNp can be cleaved (shedding). The N-terminal palmitoylated peptide is cleaved at the Cardin-Weintraub (CW) motif site. The cleavage reduced the interactions with heparan sulfate. The cleavage is enhanced by SCUBE2. As to expression, expressed in the ventral midline of the neural tube and brain. Also found in the notochord and in developing fin bud. In the developing brain, expression occurs in domains that include a discrete region in the floor of the diencephalon.

Its subcellular location is the endoplasmic reticulum membrane. The protein resides in the golgi apparatus membrane. The protein localises to the cell membrane. It catalyses the reaction glycyl-L-cysteinyl-[protein] + cholesterol + H(+) = [protein]-C-terminal glycyl cholesterol ester + N-terminal L-cysteinyl-[protein]. Functionally, the C-terminal part of the sonic hedgehog protein precursor displays an autoproteolysis and a cholesterol transferase activity. Both activities result in the cleavage of the full-length protein into two parts (ShhN and ShhC) followed by the covalent attachment of a cholesterol moiety to the C-terminal of the newly generated ShhN. Both activities occur in the endoplasmic reticulum. Once cleaved, ShhC is degraded in the endoplasmic reticulum. The dually lipidated sonic hedgehog protein N-product (ShhNp) is a morphogen which is essential for a variety of patterning events during development. Involved in dorso-ventral patterning of the brain and in early patterning of the developing eyes. Binds to the patched (PTCH1) receptor, which functions in association with smoothened (SMO), to activate the transcription of target genes. In the absence of SHH, PTCH1 represses the constitutive signaling activity of SMO. This chain is Sonic hedgehog protein (shha), found in Danio rerio (Zebrafish).